Reading from the N-terminus, the 274-residue chain is Ethanolamine ammonia-lyase small subunit (274 aa).

Adenosylcob(III)alamin contacts are provided by valine 161, glutamate 182, and cysteine 211.

It belongs to the EutC family. As to quaternary structure, the basic unit is a heterodimer which dimerizes to form tetramers. The heterotetramers trimerize; 6 large subunits form a core ring with 6 small subunits projecting outwards. It depends on adenosylcob(III)alamin as a cofactor.

Its subcellular location is the bacterial microcompartment. The catalysed reaction is ethanolamine = acetaldehyde + NH4(+). Its pathway is amine and polyamine degradation; ethanolamine degradation. Functionally, catalyzes the deamination of various vicinal amino-alcohols to oxo compounds. Allows this organism to utilize ethanolamine as the sole source of nitrogen and carbon in the presence of external vitamin B12. In Pseudomonas fluorescens (strain Pf0-1), this protein is Ethanolamine ammonia-lyase small subunit.